The chain runs to 185 residues: HTH-type transcriptional regulator Hpr (185 aa).

In terms of domain architecture, HTH marR-type spans 13–157; that stretch reads AMIFSQRIAQ…LIAILRNIYG (145 aa). A DNA-binding region (H-T-H motif) is located at residues 63–86; sequence ISEIAKFGVMHVSTAFNFSKKLEE.

Homodimer.

Negative regulator of protease production and sporulation. This Bacillus mycoides (strain KBAB4) (Bacillus weihenstephanensis) protein is HTH-type transcriptional regulator Hpr.